The chain runs to 173 residues: Crossover junction endodeoxyribonuclease RuvC (173 aa).

Catalysis depends on residues Asp-8, Glu-67, and Asp-139. Positions 8, 67, and 139 each coordinate Mg(2+).

It belongs to the RuvC family. In terms of assembly, homodimer which binds Holliday junction (HJ) DNA. The HJ becomes 2-fold symmetrical on binding to RuvC with unstacked arms; it has a different conformation from HJ DNA in complex with RuvA. In the full resolvosome a probable DNA-RuvA(4)-RuvB(12)-RuvC(2) complex forms which resolves the HJ. Requires Mg(2+) as cofactor.

The protein resides in the cytoplasm. It carries out the reaction Endonucleolytic cleavage at a junction such as a reciprocal single-stranded crossover between two homologous DNA duplexes (Holliday junction).. Its function is as follows. The RuvA-RuvB-RuvC complex processes Holliday junction (HJ) DNA during genetic recombination and DNA repair. Endonuclease that resolves HJ intermediates. Cleaves cruciform DNA by making single-stranded nicks across the HJ at symmetrical positions within the homologous arms, yielding a 5'-phosphate and a 3'-hydroxyl group; requires a central core of homology in the junction. The consensus cleavage sequence is 5'-(A/T)TT(C/G)-3'. Cleavage occurs on the 3'-side of the TT dinucleotide at the point of strand exchange. HJ branch migration catalyzed by RuvA-RuvB allows RuvC to scan DNA until it finds its consensus sequence, where it cleaves and resolves the cruciform DNA. This is Crossover junction endodeoxyribonuclease RuvC from Salmonella agona (strain SL483).